Here is a 328-residue protein sequence, read N- to C-terminus: Nitrilase (328 aa).

A CN hydrolase domain is found at 9-286; it reads VRVAAIQAEP…EGILYANVDV (278 aa). Glu-49 acts as the Proton acceptor in catalysis. The active site involves Lys-131. The active-site Nucleophile is Cys-166.

It belongs to the carbon-nitrogen hydrolase superfamily. Nitrilase family.

The catalysed reaction is a nitrile + 2 H2O = a carboxylate + NH4(+). Nitrilase that hydrolyzes preferentially 4-cyanopyridine. Is also able to hydrolyze some aliphatic nitriles, such as (R,S)-mandelonitrile. In Penicillium rubens (strain ATCC 28089 / DSM 1075 / NRRL 1951 / Wisconsin 54-1255) (Penicillium chrysogenum), this protein is Nitrilase.